Consider the following 37-residue polypeptide: Esculentin-2P (37 aa).

A disulfide bridge connects residues C31 and C37.

In terms of tissue distribution, expressed by the skin glands.

The protein localises to the secreted. Functionally, antibacterial activity against Gram-negative bacterium E.coli. The sequence is that of Esculentin-2P from Lithobates pipiens (Northern leopard frog).